A 125-amino-acid chain; its full sequence is Inner membrane protein YbjM (125 aa).

Over Met1–Arg6 the chain is Cytoplasmic. The helical transmembrane segment at Trp7–His27 threads the bilayer. Residues Met28–Ala34 lie on the Periplasmic side of the membrane. Residues Ala35–Phe55 traverse the membrane as a helical segment. The Cytoplasmic portion of the chain corresponds to Ser56–Pro64. The helical transmembrane segment at Leu65–Pro85 threads the bilayer. At Thr86 to Glu92 the chain is on the periplasmic side. A helical membrane pass occupies residues Leu93–Ile113. At Ser114–Gln125 the chain is on the cytoplasmic side.

The protein resides in the cell inner membrane. This chain is Inner membrane protein YbjM (ybjM), found in Escherichia coli O157:H7.